The following is a 184-amino-acid chain: Orotate phosphoribosyltransferase (184 aa).

5-phospho-alpha-D-ribose 1-diphosphate-binding positions include Arg-99, Lys-100, Lys-103, His-105, and Glu-125–Ser-133. Residues Thr-129 and Arg-157 each coordinate orotate.

The protein belongs to the purine/pyrimidine phosphoribosyltransferase family. PyrE subfamily. In terms of assembly, homodimer. It depends on Mg(2+) as a cofactor.

The catalysed reaction is orotidine 5'-phosphate + diphosphate = orotate + 5-phospho-alpha-D-ribose 1-diphosphate. The protein operates within pyrimidine metabolism; UMP biosynthesis via de novo pathway; UMP from orotate: step 1/2. Functionally, catalyzes the transfer of a ribosyl phosphate group from 5-phosphoribose 1-diphosphate to orotate, leading to the formation of orotidine monophosphate (OMP). This Corynebacterium glutamicum (strain R) protein is Orotate phosphoribosyltransferase.